We begin with the raw amino-acid sequence, 184 residues long: Protein MEH1 (184 aa).

Gly2 carries N-myristoyl glycine lipidation. 2 S-palmitoyl cysteine lipidation sites follow: Cys7 and Cys8. Residues 30–71 are a coiled coil; sequence QGNANDEYDAEQMRLKEHEHEQKLLAREQELRDIVANTNDKL. Positions 89 to 147 are disordered; the sequence is LQEALDKRQQEEGGDSREDERSAGDDNLSGHSVPSSGSAQATTHQTAPRTNTFTLLTSP. Over residues 92–112 the composition is skewed to basic and acidic residues; sequence ALDKRQQEEGGDSREDERSAG. Positions 117-147 are enriched in polar residues; sequence SGHSVPSSGSAQATTHQTAPRTNTFTLLTSP. Residues Ser146 and Ser149 each carry the phosphoserine modification.

As to quaternary structure, component of the GSE complex composed of GTR1, GTR2, SLM4, MEH1 and LTV1. Component of the EGO complex, at least composed of GTR2, SLM4 and MEH1.

It localises to the vacuole membrane. In terms of biological role, component of the GSE complex, a GTPase complex required for intracellular sorting of GAP1 out of the endosome. Component of the EGO complex, a complex involved in the regulation of microautophagy. The polypeptide is Protein MEH1 (MEH1) (Saccharomyces cerevisiae (strain ATCC 204508 / S288c) (Baker's yeast)).